Reading from the N-terminus, the 148-residue chain is Receptor activity-modifying protein 1 (148 aa).

An N-terminal signal peptide occupies residues 1–26; sequence MARALCRLPRRGLWLLLAHHLFMTTA. 3 disulfides stabilise this stretch: C27/C82, C40/C72, and C57/C104. The Extracellular segment spans residues 27-118; sequence CQEANYGALL…RAVRDPPGSI (92 aa). Residues 119–140 traverse the membrane as a helical segment; it reads LYPFIVVPITVTLLVTALVVWQ. Topologically, residues 141–148 are cytoplasmic; that stretch reads SKRTEGIV.

The protein belongs to the RAMP family. Heterodimer of CALCRL and RAMP1; the interaction induces allosteric modulation of CALCRL function and CGRP1/CALCA and CGRP2/CALCB ligand specificity. Heterodimer of CALCR and RAMP1; interaction forms the AMYR1 receptor complex for amylin/IAPP and CGRP1/CALCA ligands. Expressed in many tissues including the uterus, bladder, brain, pancreas and gastro-intestinal tract.

It is found in the cell membrane. Functionally, accessory protein that interacts with and modulates the function of G-protein coupled receptors including calcitonin gene-related peptide type 1 receptor (CALCRL) and calcitonin receptor (CALCR). Required for the transport of CALCRL to the plasma membrane. Together with CALCRL, form the receptor complex for the calcitonin gene-related peptides CGRP1/CALCA and CGRP2/CALCB. Together with CALCR, form the AMYR1 receptor complex for amylin/IAPP and CGRP1/CALCA. This chain is Receptor activity-modifying protein 1, found in Homo sapiens (Human).